The chain runs to 384 residues: Substance-K receptor (384 aa).

The Extracellular portion of the chain corresponds to 1–32; it reads MGACVVMTDINISSGLDSNATGITAFSMPGWQ. N-linked (GlcNAc...) asparagine glycans are attached at residues asparagine 11 and asparagine 19. Residues 33 to 56 form a helical membrane-spanning segment; it reads LALWTAAYLALVLVAVMGNATVIW. The Cytoplasmic portion of the chain corresponds to 57-69; it reads IILAHQRMRTVTN. Residues 70-90 traverse the membrane as a helical segment; the sequence is YFIVNLALADLCMAAFNAAFN. Residues 91–107 are Extracellular-facing; it reads FVYASHNIWYFGRAFCY. Cysteine 106 and cysteine 181 form a disulfide bridge. The chain crosses the membrane as a helical span at residues 108–129; it reads FQNLFPITAMFVSIYSMTAIAA. The Cytoplasmic portion of the chain corresponds to 130 to 149; sequence DRYMAIVHPFQPRLSAPGTR. The helical transmembrane segment at 150-170 threads the bilayer; sequence AVIAGIWLVALALAFPQCFYS. Topologically, residues 171 to 196 are extracellular; that stretch reads TITTDEGATKCVVAWPEDSGGKMLLL. A helical membrane pass occupies residues 197–218; sequence YHLIVIALIYFLPLVVMFVAYS. The Cytoplasmic portion of the chain corresponds to 219–251; that stretch reads VIGLTLWRRSVPGHQAHGANLRHLQAKKKFVKT. The helical transmembrane segment at 252-272 threads the bilayer; the sequence is MVLVVVTFAICWLPYHLYFIL. Residues 273–290 lie on the Extracellular side of the membrane; sequence GTFQEDIYCHKFIQQVYL. Residues 291–310 traverse the membrane as a helical segment; sequence ALFWLAMSSTMYNPIIYCCL. Topologically, residues 311 to 384 are cytoplasmic; it reads NHRFRSGFRL…SPQAGVSTEP (74 aa). Cysteine 324 is lipidated: S-palmitoyl cysteine.

The protein belongs to the G-protein coupled receptor 1 family.

It is found in the cell membrane. This is a receptor for the tachykinin neuropeptide substance K (neurokinin A). It is associated with G proteins that activate a phosphatidylinositol-calcium second messenger system. The rank order of affinity of this receptor to tachykinins is: substance K &gt; neuromedin-K &gt; substance P. This Bos taurus (Bovine) protein is Substance-K receptor (TACR2).